The following is a 21-amino-acid chain: TTVYDAEGSKVDFDGSLRIIV.

As to quaternary structure, monomer.

Its subcellular location is the cell outer membrane. The chain is Major outer membrane protein P44 from Mannheimia haemolytica (Pasteurella haemolytica).